Consider the following 341-residue polypeptide: Ketol-acid reductoisomerase (NADP(+)) (341 aa).

The 180-residue stretch at 2–181 (AKVYYNGDVN…GAARAGVLET (180 aa)) folds into the KARI N-terminal Rossmann domain. NADP(+) is bound by residues 25 to 28 (YGSQ), arginine 48, serine 52, and 82 to 85 (DEHQ). Histidine 107 is a catalytic residue. Glycine 133 serves as a coordination point for NADP(+). In terms of domain architecture, KARI C-terminal knotted spans 182–327 (TFKEETETDL…RELREMMPFV (146 aa)). Positions 190, 194, 226, and 230 each coordinate Mg(2+). Substrate is bound at residue serine 251.

It belongs to the ketol-acid reductoisomerase family. Mg(2+) is required as a cofactor.

It catalyses the reaction (2R)-2,3-dihydroxy-3-methylbutanoate + NADP(+) = (2S)-2-acetolactate + NADPH + H(+). It carries out the reaction (2R,3R)-2,3-dihydroxy-3-methylpentanoate + NADP(+) = (S)-2-ethyl-2-hydroxy-3-oxobutanoate + NADPH + H(+). The protein operates within amino-acid biosynthesis; L-isoleucine biosynthesis; L-isoleucine from 2-oxobutanoate: step 2/4. It participates in amino-acid biosynthesis; L-valine biosynthesis; L-valine from pyruvate: step 2/4. In terms of biological role, involved in the biosynthesis of branched-chain amino acids (BCAA). Catalyzes an alkyl-migration followed by a ketol-acid reduction of (S)-2-acetolactate (S2AL) to yield (R)-2,3-dihydroxy-isovalerate. In the isomerase reaction, S2AL is rearranged via a Mg-dependent methyl migration to produce 3-hydroxy-3-methyl-2-ketobutyrate (HMKB). In the reductase reaction, this 2-ketoacid undergoes a metal-dependent reduction by NADPH to yield (R)-2,3-dihydroxy-isovalerate. This chain is Ketol-acid reductoisomerase (NADP(+)), found in Shouchella clausii (strain KSM-K16) (Alkalihalobacillus clausii).